A 335-amino-acid chain; its full sequence is Serpentine receptor class gamma-11 (335 aa).

7 helical membrane passes run 33–53 (FLQI…LYTI), 66–86 (FFLI…LDII), 98–118 (PIIA…MIVL), 154–174 (LKYL…NLII), 202–222 (FQLI…SVIF), 242–262 (GTAY…LFAF), and 271–291 (TIFG…PIIM).

This sequence belongs to the nematode receptor-like protein srg family.

It localises to the membrane. This is Serpentine receptor class gamma-11 (srg-11) from Caenorhabditis elegans.